A 324-amino-acid chain; its full sequence is Galectin-4 (324 aa).

2 consecutive Galectin domains span residues 19 to 150 (YKRP…INFL) and 196 to 324 (YVGT…YVQI). Residue 257–263 (WGSEERK) coordinates a beta-D-galactoside. The residue at position 259 (serine 259) is a Phosphoserine.

Monomer. In terms of tissue distribution, highly expressed in full-length form in small and large intestine and stomach but was not detected in other tissues including lung, liver, kidney and spleen.

Galectin that binds lactose and a related range of sugars. In Rattus norvegicus (Rat), this protein is Galectin-4 (Lgals4).